The following is a 290-amino-acid chain: 33 kDa chaperonin (290 aa).

Intrachain disulfides connect Cys231/Cys233 and Cys264/Cys267.

Belongs to the HSP33 family. Post-translationally, under oxidizing conditions two disulfide bonds are formed involving the reactive cysteines. Under reducing conditions zinc is bound to the reactive cysteines and the protein is inactive.

It is found in the cytoplasm. Redox regulated molecular chaperone. Protects both thermally unfolding and oxidatively damaged proteins from irreversible aggregation. Plays an important role in the bacterial defense system toward oxidative stress. The sequence is that of 33 kDa chaperonin from Photorhabdus laumondii subsp. laumondii (strain DSM 15139 / CIP 105565 / TT01) (Photorhabdus luminescens subsp. laumondii).